A 331-amino-acid polypeptide reads, in one-letter code: Ketol-acid reductoisomerase (NADP(+)) (331 aa).

Residues 2–182 (AKMYYDKDAD…GGTRAGVIET (181 aa)) enclose the KARI N-terminal Rossmann domain. NADP(+) is bound by residues 25–28 (FGSQ), Ser51, Ser53, and 83–86 (DEKQ). His108 is a catalytic residue. Gly134 contributes to the NADP(+) binding site. One can recognise a KARI C-terminal knotted domain in the interval 183–328 (TFKEETETDL…KGLREMMAWI (146 aa)). Mg(2+)-binding residues include Asp191, Glu195, Glu227, and Glu231. Ser252 contributes to the substrate binding site.

This sequence belongs to the ketol-acid reductoisomerase family. Requires Mg(2+) as cofactor.

The catalysed reaction is (2R)-2,3-dihydroxy-3-methylbutanoate + NADP(+) = (2S)-2-acetolactate + NADPH + H(+). It carries out the reaction (2R,3R)-2,3-dihydroxy-3-methylpentanoate + NADP(+) = (S)-2-ethyl-2-hydroxy-3-oxobutanoate + NADPH + H(+). The protein operates within amino-acid biosynthesis; L-isoleucine biosynthesis; L-isoleucine from 2-oxobutanoate: step 2/4. It functions in the pathway amino-acid biosynthesis; L-valine biosynthesis; L-valine from pyruvate: step 2/4. In terms of biological role, involved in the biosynthesis of branched-chain amino acids (BCAA). Catalyzes an alkyl-migration followed by a ketol-acid reduction of (S)-2-acetolactate (S2AL) to yield (R)-2,3-dihydroxy-isovalerate. In the isomerase reaction, S2AL is rearranged via a Mg-dependent methyl migration to produce 3-hydroxy-3-methyl-2-ketobutyrate (HMKB). In the reductase reaction, this 2-ketoacid undergoes a metal-dependent reduction by NADPH to yield (R)-2,3-dihydroxy-isovalerate. This is Ketol-acid reductoisomerase (NADP(+)) from Thermoanaerobacter sp. (strain X514).